The chain runs to 392 residues: NDP-glycosyltransferase YjiC (392 aa).

UDP contacts are provided by residues N18, T229, S255, V278, H293, and 297–301; that span reads NSTME.

It belongs to the UDP-glycosyltransferase family. In terms of assembly, monomer.

The enzyme catalyses an NDP-glycose + an acceptor = a glycosylated acceptor + NDP.. Its activity is regulated as follows. Activity is improved in the presence of Mn(2+), Mg(2+) and Ca(2+), and inhibited by Ni(2+), Zn(2+) and Cu(2+). Functionally, glycosyltransferase that can glycosylate a wide range of substrates, including various flavonoids, phenyl ketones, curcuminoid, lignins, zingerone, triterpenes, stilbene and anthraquinone, using UDP-glucose or ADP-glucose as sugar donor. It also exhibits O-, N- and S-glycosylation activities towards simple aromatics. In vivo, the broad acceptor tolerance of YjiC might function as a detoxification agent against exogenous xenobiotics to make the strain adaptable to the changeable environment. The chain is NDP-glycosyltransferase YjiC (yjiC) from Bacillus subtilis (strain 168).